A 411-amino-acid polypeptide reads, in one-letter code: Protein translocase subunit SecY (411 aa).

10 helical membrane-spanning segments follow: residues 13–33, 52–72, 111–131, 135–155, 163–180, 197–217, 252–272, 291–311, 350–370, and 377–397; these read FTLLLLVLARLGIFIPVPGID, IFSGGGFSTIGIFALGIVPYI, ALGWATLQSGAISIWVKPYVF, FTFVCESVLALTAGSMIIMWL, GIGNGASLLIFQNIVSGL, SIKFGLFIVIFLLMIIITIFV, GVMPIVFASASMALPAYLTQL, LYLVLYSVLILFFSYFYTSIV, FLGATFLFTVALIPFIIEKVA, and GLGATSLLILVGVAIDTAKQI.

It belongs to the SecY/SEC61-alpha family. As to quaternary structure, component of the plastid Sec protein translocase complex, which is composed of at least SecY, SecE and SecG.

It localises to the plastid. It is found in the chloroplast thylakoid membrane. Functionally, the central subunit of the protein translocation channel SecYE. Consists of two halves formed by TMs 1-5 and 6-10. These two domains form a lateral gate at the front which open onto the bilayer between TMs 2 and 7, and are clamped together by SecE at the back. The channel is closed by both a pore ring composed of hydrophobic SecY resides and a short helix (helix 2A) on the extracellular side of the membrane which forms a plug. This chain is Protein translocase subunit SecY, found in Porphyra purpurea (Red seaweed).